Reading from the N-terminus, the 95-residue chain is Small ribosomal subunit protein bS16 (95 aa).

Belongs to the bacterial ribosomal protein bS16 family.

The polypeptide is Small ribosomal subunit protein bS16 (Streptococcus pneumoniae (strain CGSP14)).